The primary structure comprises 255 residues: Indole-3-glycerol phosphate synthase (255 aa).

This sequence belongs to the TrpC family.

The catalysed reaction is 1-(2-carboxyphenylamino)-1-deoxy-D-ribulose 5-phosphate + H(+) = (1S,2R)-1-C-(indol-3-yl)glycerol 3-phosphate + CO2 + H2O. Its pathway is amino-acid biosynthesis; L-tryptophan biosynthesis; L-tryptophan from chorismate: step 4/5. The protein is Indole-3-glycerol phosphate synthase of Streptococcus thermophilus (strain CNRZ 1066).